The chain runs to 277 residues: Cell wall protein PGA30 (277 aa).

A signal peptide spans 1–18 (MKYFTIATVLTLASSALA). N-linked (GlcNAc...) asparagine glycosylation is found at N129 and N178. A disordered region spans residues 219–246 (VLPSSSTEAPPKTSVAAPSTTAEAQTTA). The span at 234 to 246 (AAPSTTAEAQTTA) shows a compositional bias: polar residues. G253 is lipidated: GPI-anchor amidated glycine. Positions 254 to 277 (GANEIVGGGSMAIALAAAAIGLVI) are cleaved as a propeptide — removed in mature form.

It belongs to the SRP1/TIP1 family. In terms of processing, the GPI-anchor is attached to the protein in the endoplasmic reticulum and serves to target the protein to the cell surface. There, the glucosamine-inositol phospholipid moiety is cleaved off and the GPI-modified mannoprotein is covalently attached via its lipidless GPI glycan remnant to the 1,6-beta-glucan of the outer cell wall layer.

It localises to the secreted. It is found in the cell wall. The protein resides in the membrane. Component of the cell wall involved in virulence which plays a role in the relationship between C.albicans and the host. The protein is Cell wall protein PGA30 (PGA30) of Candida albicans (strain SC5314 / ATCC MYA-2876) (Yeast).